Consider the following 88-residue polypeptide: Putative regulatory protein AM1_5498 (88 aa).

This sequence belongs to the RemA family.

This is Putative regulatory protein AM1_5498 from Acaryochloris marina (strain MBIC 11017).